We begin with the raw amino-acid sequence, 552 residues long: 5'-AMP-activated protein kinase catalytic subunit alpha-2 (552 aa).

One can recognise a Protein kinase domain in the interval 16-268 (YVLGDTLGVG…IKDIREHEWF (253 aa)). ATP contacts are provided by residues 22–30 (LGVGTFGKV) and K45. The Proton acceptor role is filled by D139. A Phosphothreonine; by LKB1 and CaMKK2 modification is found at T172. Residue T258 is modified to Phosphothreonine. The tract at residues 291–376 (EAVKEVCEKF…PERMPPLIAD (86 aa)) is AIS. S377 bears the Phosphoserine mark. Residues 478–520 (EQRSGSSTPQRSCSAAGLHRPRSSVDSSTAENHSLSGSLTGSL) form a disordered region. Residues 480–490 (RSGSSTPQRSC) are compositionally biased toward polar residues. S491 carries the post-translational modification Phosphoserine. Residues 501–510 (SVDSSTAENH) show a composition bias toward polar residues. Residues 511-520 (SLSGSLTGSL) show a composition bias toward low complexity.

This sequence belongs to the protein kinase superfamily. CAMK Ser/Thr protein kinase family. SNF1 subfamily. In terms of assembly, AMPK is a heterotrimer of an alpha catalytic subunit (PRKAA1 or PRKAA2), a beta (PRKAB1 or PRKAB2) and a gamma non-catalytic subunits (PRKAG1, PRKAG2 or PRKAG3). Interacts with FNIP1 and FNIP2. Associates with internalized INSR complexes on Golgi/endosomal membranes; PRKAA2/AMPK2 together with ATIC and HACD3/PTPLAD1 is proposed to be part of a signaling network regulating INSR autophosphorylation and endocytosis. Interacts with DUSP29. Interacts with ARF6. The phosphorylated form at Thr-172 mediated by CamKK2 interacts with ACSS2. Mg(2+) serves as cofactor. Ubiquitinated. Post-translationally, phosphorylated at Thr-172 by STK11/LKB1 in complex with STE20-related adapter-alpha (STRADA) pseudo kinase and CAB39. Also phosphorylated at Thr-172 by CAMKK2; triggered by a rise in intracellular calcium ions, without detectable changes in the AMP/ATP ratio. CAMKK1 can also phosphorylate Thr-172, but at much lower level. Dephosphorylated by protein phosphatase 2A and 2C (PP2A and PP2C). Phosphorylated by ULK1; leading to negatively regulate AMPK activity and suggesting the existence of a regulatory feedback loop between ULK1 and AMPK. Dephosphorylated by PPM1A and PPM1B at Thr-172 (mediated by STK11/LKB1). As to expression, skeletal muscle, lower levels in liver, heart and kidney.

The protein localises to the cytoplasm. The protein resides in the nucleus. It carries out the reaction L-seryl-[protein] + ATP = O-phospho-L-seryl-[protein] + ADP + H(+). It catalyses the reaction L-threonyl-[protein] + ATP = O-phospho-L-threonyl-[protein] + ADP + H(+). The enzyme catalyses L-seryl-[acetyl-CoA carboxylase] + ATP = O-phospho-L-seryl-[acetyl-CoA carboxylase] + ADP + H(+). The catalysed reaction is L-seryl-[3-hydroxy-3-methylglutaryl-coenzyme A reductase] + ATP = O-phospho-L-seryl-[3-hydroxy-3-methylglutaryl-coenzyme A reductase] + ADP + H(+). Activated by phosphorylation on Thr-172. Binding of AMP to non-catalytic gamma subunit (PRKAG1, PRKAG2 or PRKAG3) results in allosteric activation, inducing phosphorylation on Thr-172. AMP-binding to gamma subunit also sustains activity by preventing dephosphorylation of Thr-172. ADP also stimulates Thr-172 phosphorylation, without stimulating already phosphorylated AMPK. ATP promotes dephosphorylation of Thr-172, rendering the enzyme inactive. Under physiological conditions AMPK mainly exists in its inactive form in complex with ATP, which is much more abundant than AMP. Selectively inhibited by compound C (6-[4-(2-Piperidin-1-yl-ethoxy)-phenyl)]-3-pyridin-4-yl-pyyrazolo[1,5-a] pyrimidine. Activated by resveratrol, a natural polyphenol present in red wine, and S17834, a synthetic polyphenol. Salicylate/aspirin directly activates kinase activity, primarily by inhibiting Thr-172 dephosphorylation. In terms of biological role, catalytic subunit of AMP-activated protein kinase (AMPK), an energy sensor protein kinase that plays a key role in regulating cellular energy metabolism. In response to reduction of intracellular ATP levels, AMPK activates energy-producing pathways and inhibits energy-consuming processes: inhibits protein, carbohydrate and lipid biosynthesis, as well as cell growth and proliferation. AMPK acts via direct phosphorylation of metabolic enzymes, and by longer-term effects via phosphorylation of transcription regulators. Regulates lipid synthesis by phosphorylating and inactivating lipid metabolic enzymes such as ACACA, ACACB, GYS1, HMGCR and LIPE; regulates fatty acid and cholesterol synthesis by phosphorylating acetyl-CoA carboxylase (ACACA and ACACB) and hormone-sensitive lipase (LIPE) enzymes, respectively. Promotes lipolysis of lipid droplets by mediating phosphorylation of isoform 1 of CHKA (CHKalpha2). Regulates insulin-signaling and glycolysis by phosphorylating IRS1, PFKFB2 and PFKFB3. Involved in insulin receptor/INSR internalization. AMPK stimulates glucose uptake in muscle by increasing the translocation of the glucose transporter SLC2A4/GLUT4 to the plasma membrane, possibly by mediating phosphorylation of TBC1D4/AS160. Regulates transcription and chromatin structure by phosphorylating transcription regulators involved in energy metabolism such as CRTC2/TORC2, FOXO3, histone H2B, HDAC5, MEF2C, MLXIPL/ChREBP, EP300, HNF4A, p53/TP53, SREBF1, SREBF2 and PPARGC1A. Acts as a key regulator of glucose homeostasis in liver by phosphorylating CRTC2/TORC2, leading to CRTC2/TORC2 sequestration in the cytoplasm. In response to stress, phosphorylates 'Ser-36' of histone H2B (H2BS36ph), leading to promote transcription. Acts as a key regulator of cell growth and proliferation by phosphorylating FNIP1, TSC2, RPTOR, WDR24 and ATG1/ULK1: in response to nutrient limitation, negatively regulates the mTORC1 complex by phosphorylating RPTOR component of the mTORC1 complex and by phosphorylating and activating TSC2. Also phosphorylates and inhibits GATOR2 subunit WDR24 in response to nutrient limitation, leading to suppress glucose-mediated mTORC1 activation. In response to energetic stress, phosphorylates FNIP1, inactivating the non-canonical mTORC1 signaling, thereby promoting nuclear translocation of TFEB and TFE3, and inducing transcription of lysosomal or autophagy genes. In response to nutrient limitation, promotes autophagy by phosphorylating and activating ATG1/ULK1. In that process, it also activates WDR45/WIPI4. Phosphorylates CASP6, thereby preventing its autoprocessing and subsequent activation. AMPK also acts as a regulator of circadian rhythm by mediating phosphorylation of CRY1, leading to destabilize it. May regulate the Wnt signaling pathway by phosphorylating CTNNB1, leading to stabilize it. Also acts as a regulator of cellular polarity by remodeling the actin cytoskeleton; probably by indirectly activating myosin. Also phosphorylates CFTR, EEF2K, KLC1, NOS3 and SLC12A1. Plays an important role in the differential regulation of pro-autophagy (composed of PIK3C3, BECN1, PIK3R4 and UVRAG or ATG14) and non-autophagy (composed of PIK3C3, BECN1 and PIK3R4) complexes, in response to glucose starvation. Can inhibit the non-autophagy complex by phosphorylating PIK3C3 and can activate the pro-autophagy complex by phosphorylating BECN1. Upon glucose starvation, promotes ARF6 activation in a kinase-independent manner leading to cell migration. Upon glucose deprivation mediates the phosphorylation of ACSS2 at 'Ser-659', which exposes the nuclear localization signal of ACSS2, required for its interaction with KPNA1 and nuclear translocation. Upon stress, regulates mitochondrial fragmentation through phosphorylation of MTFR1L. The polypeptide is 5'-AMP-activated protein kinase catalytic subunit alpha-2 (Prkaa2) (Rattus norvegicus (Rat)).